The following is a 202-amino-acid chain: Glycolipid transfer protein 1 (202 aa).

A ganglioside GM3 (d18:1(4E))-binding residues include Asp-52, Asn-56, Trp-99, and His-138.

The protein belongs to the GLTP family.

May be involved in glycolipids transfer. The protein is Glycolipid transfer protein 1 of Arabidopsis thaliana (Mouse-ear cress).